A 514-amino-acid polypeptide reads, in one-letter code: Putative ribose/galactose/methyl galactoside import ATP-binding protein 3 (514 aa).

2 consecutive ABC transporter domains span residues 21–256 (LRLD…VGRT) and 267–512 (VPTD…SGRS). Residue 53-60 (GENGAGKS) coordinates ATP.

Belongs to the ABC transporter superfamily. Carbohydrate importer 2 (CUT2) (TC 3.A.1.2) family.

The protein localises to the cell inner membrane. The catalysed reaction is D-ribose(out) + ATP + H2O = D-ribose(in) + ADP + phosphate + H(+). The enzyme catalyses D-galactose(out) + ATP + H2O = D-galactose(in) + ADP + phosphate + H(+). In terms of biological role, part of an ABC transporter complex involved in carbohydrate import. Could be involved in ribose, galactose and/or methyl galactoside import. Responsible for energy coupling to the transport system. In Burkholderia cenocepacia (strain HI2424), this protein is Putative ribose/galactose/methyl galactoside import ATP-binding protein 3.